The sequence spans 417 residues: MATSIPRSRCFLTSSTLKVVPRSRTPLRSFATTSDTPQTSVPEAPGKRSRPPTSFSDTLNAGPSFGDFVNPNAPLSPTEAYEIKTVQVGPEGRKKTITRLPEWLRTPIPSNANQNYKQIKKDLRGLNLATVCEEARCPNISDCWGGSSKSAATATIMLMGDTCTRGCRFCAVKTSKAPPPLDPHEPENTAEALRRWGLGYVVITVVDRDDLADSGAHHIAETIMKIKQKNPTQLVELLGGDYGGNLEMAKVVARSGVDVFAHNIETTERLTPFVRDRRAKFRQSLDVLRSAKEERPELITKTSMMLGLGETDEDLWHALRELRANNVDVVTFGQYMRPTKRHMAVHDYVTPDKFELWRQRALDMGFLYCASGPLVRSSYKAGEAFIENVLKKRRLGSSAGKNDVAELSAAEEVGKAL.

The transit peptide at 1–30 directs the protein to the mitochondrion; it reads MATSIPRSRCFLTSSTLKVVPRSRTPLRSF. Residues 23–62 form a disordered region; the sequence is SRTPLRSFATTSDTPQTSVPEAPGKRSRPPTSFSDTLNAG. 2 stretches are compositionally biased toward polar residues: residues 30–41 and 51–61; these read FATTSDTPQTSV and PPTSFSDTLNA. Cys132, Cys137, Cys143, Cys163, Cys167, Cys170, and Ser378 together coordinate [4Fe-4S] cluster. One can recognise a Radical SAM core domain in the interval 146-367; the sequence is GSSKSAATAT…RQRALDMGFL (222 aa).

The protein belongs to the radical SAM superfamily. Lipoyl synthase family. The cofactor is [4Fe-4S] cluster.

It localises to the mitochondrion. It catalyses the reaction [[Fe-S] cluster scaffold protein carrying a second [4Fe-4S](2+) cluster] + N(6)-octanoyl-L-lysyl-[protein] + 2 oxidized [2Fe-2S]-[ferredoxin] + 2 S-adenosyl-L-methionine + 4 H(+) = [[Fe-S] cluster scaffold protein] + N(6)-[(R)-dihydrolipoyl]-L-lysyl-[protein] + 4 Fe(3+) + 2 hydrogen sulfide + 2 5'-deoxyadenosine + 2 L-methionine + 2 reduced [2Fe-2S]-[ferredoxin]. The protein operates within protein modification; protein lipoylation via endogenous pathway; protein N(6)-(lipoyl)lysine from octanoyl-[acyl-carrier-protein]: step 2/2. Functionally, catalyzes the radical-mediated insertion of two sulfur atoms into the C-6 and C-8 positions of the octanoyl moiety bound to the lipoyl domains of lipoate-dependent enzymes, thereby converting the octanoylated domains into lipoylated derivatives. The polypeptide is Lipoyl synthase, mitochondrial (Pyrenophora tritici-repentis (strain Pt-1C-BFP) (Wheat tan spot fungus)).